The chain runs to 465 residues: Glutathione reductase (465 aa).

Ser16 and Gly17 together coordinate FAD. Residue Ser16 participates in glutathione binding. Arg23 contacts glutathione. 4 residues coordinate FAD: Glu42, Thr49, Cys50, and Lys58. A disulfide bridge links Cys50 with Cys55. A glutathione-binding site is contributed by Tyr108. Gly124 contributes to the FAD binding site. Residues Ala187, Ile190, Glu193, Arg210, Arg216, and Gly276 each coordinate NADP(+). FAD is bound at residue Asp318. Leu324 contributes to the NADP(+) binding site. Thr326 serves as a coordination point for FAD. Residue Arg334 participates in glutathione binding. Val357 lines the NADP(+) pocket. His454 contributes to the FAD binding site. His454 acts as the Proton acceptor in catalysis.

This sequence belongs to the class-I pyridine nucleotide-disulfide oxidoreductase family. It depends on FAD as a cofactor.

It localises to the cytoplasm. The enzyme catalyses 2 glutathione + NADP(+) = glutathione disulfide + NADPH + H(+). Functionally, catalyzes the reduction of glutathione disulfide (GSSG) to reduced glutathione (GSH). Constitutes the major mechanism to maintain a high GSH:GSSG ratio in the cytosol. The amount of GSH may affect the determination of cell fate. This is Glutathione reductase (gsr) from Dictyostelium discoideum (Social amoeba).